The chain runs to 360 residues: Ferredoxin--NADP reductase (360 aa).

FAD-binding residues include Thr-25, Glu-44, Gln-52, Tyr-57, Val-97, Phe-132, Asp-298, and Ser-339.

The protein belongs to the ferredoxin--NADP reductase type 2 family. In terms of assembly, homodimer. FAD serves as cofactor.

It catalyses the reaction 2 reduced [2Fe-2S]-[ferredoxin] + NADP(+) + H(+) = 2 oxidized [2Fe-2S]-[ferredoxin] + NADPH. This chain is Ferredoxin--NADP reductase, found in Chlorobaculum tepidum (strain ATCC 49652 / DSM 12025 / NBRC 103806 / TLS) (Chlorobium tepidum).